Here is a 464-residue protein sequence, read N- to C-terminus: Glutamate--tRNA ligase 1 (464 aa).

The 'HIGH' region motif lies at 10–20; the sequence is PSPTGYLHIGG. Residues 238–242 carry the 'KMSKS' region motif; that stretch reads KLSKR. Lysine 241 contacts ATP.

Belongs to the class-I aminoacyl-tRNA synthetase family. Glutamate--tRNA ligase type 1 subfamily. As to quaternary structure, monomer.

It is found in the cytoplasm. It catalyses the reaction tRNA(Glu) + L-glutamate + ATP = L-glutamyl-tRNA(Glu) + AMP + diphosphate. Catalyzes the attachment of glutamate to tRNA(Glu) in a two-step reaction: glutamate is first activated by ATP to form Glu-AMP and then transferred to the acceptor end of tRNA(Glu). In Helicobacter hepaticus (strain ATCC 51449 / 3B1), this protein is Glutamate--tRNA ligase 1.